The primary structure comprises 261 residues: Kallikrein 1-related peptidase b8 (261 aa).

An N-terminal signal peptide occupies residues 1–18 (MRFLILFLALSLGGIDAA). The propeptide at 19–24 (PPLQSR) is activation peptide. A Peptidase S1 domain is found at 25–258 (VVGGFNCEKN…FNSWIKDTMT (234 aa)). Disulfide bonds link Cys-31–Cys-173, Cys-50–Cys-66, Cys-152–Cys-219, Cys-184–Cys-198, and Cys-209–Cys-234. His-65 serves as the catalytic Charge relay system. N-linked (GlcNAc...) asparagine glycosylation is present at Asn-102. The active-site Charge relay system is Asp-120. The Charge relay system role is filled by Ser-213.

It belongs to the peptidase S1 family. Kallikrein subfamily.

It carries out the reaction Preferential cleavage of Arg-|-Xaa bonds in small molecule substrates. Highly selective action to release kallidin (lysyl-bradykinin) from kininogen involves hydrolysis of Met-|-Xaa or Leu-|-Xaa.. Its function is as follows. Glandular kallikreins cleave Met-Lys and Arg-Ser bonds in kininogen to release Lys-bradykinin. This chain is Kallikrein 1-related peptidase b8 (Klk1b8), found in Mus musculus (Mouse).